The primary structure comprises 508 residues: Light-independent protochlorophyllide reductase subunit B (508 aa).

Asp-36 provides a ligand contact to [4Fe-4S] cluster. The active-site Proton donor is Asp-294. 429-430 (GM) contacts substrate.

It belongs to the ChlB/BchB/BchZ family. As to quaternary structure, protochlorophyllide reductase is composed of three subunits; ChlL, ChlN and ChlB. Forms a heterotetramer of two ChlB and two ChlN subunits. It depends on [4Fe-4S] cluster as a cofactor.

It catalyses the reaction chlorophyllide a + oxidized 2[4Fe-4S]-[ferredoxin] + 2 ADP + 2 phosphate = protochlorophyllide a + reduced 2[4Fe-4S]-[ferredoxin] + 2 ATP + 2 H2O. Its pathway is porphyrin-containing compound metabolism; chlorophyll biosynthesis (light-independent). In terms of biological role, component of the dark-operative protochlorophyllide reductase (DPOR) that uses Mg-ATP and reduced ferredoxin to reduce ring D of protochlorophyllide (Pchlide) to form chlorophyllide a (Chlide). This reaction is light-independent. The NB-protein (ChlN-ChlB) is the catalytic component of the complex. The polypeptide is Light-independent protochlorophyllide reductase subunit B (Trichormus variabilis (strain ATCC 29413 / PCC 7937) (Anabaena variabilis)).